Reading from the N-terminus, the 156-residue chain is ATP synthase subunit b (156 aa).

The chain crosses the membrane as a helical span at residues 11 to 31; it reads AIAFVLFVLFCMKYVWPPLMA.

Belongs to the ATPase B chain family. In terms of assembly, F-type ATPases have 2 components, F(1) - the catalytic core - and F(0) - the membrane proton channel. F(1) has five subunits: alpha(3), beta(3), gamma(1), delta(1), epsilon(1). F(0) has three main subunits: a(1), b(2) and c(10-14). The alpha and beta chains form an alternating ring which encloses part of the gamma chain. F(1) is attached to F(0) by a central stalk formed by the gamma and epsilon chains, while a peripheral stalk is formed by the delta and b chains.

The protein resides in the cell inner membrane. F(1)F(0) ATP synthase produces ATP from ADP in the presence of a proton or sodium gradient. F-type ATPases consist of two structural domains, F(1) containing the extramembraneous catalytic core and F(0) containing the membrane proton channel, linked together by a central stalk and a peripheral stalk. During catalysis, ATP synthesis in the catalytic domain of F(1) is coupled via a rotary mechanism of the central stalk subunits to proton translocation. Functionally, component of the F(0) channel, it forms part of the peripheral stalk, linking F(1) to F(0). The sequence is that of ATP synthase subunit b from Sodalis glossinidius (strain morsitans).